The sequence spans 681 residues: T-box brain protein 1 (681 aa).

Disordered stretches follow at residues 43 to 83 (TDNL…RSKL) and 108 to 127 (SQSSQPQSAATAPSAMFPYP). Polar residues predominate over residues 58–68 (GMTNQSDTDNF). Residues 108–122 (SQSSQPQSAATAPSA) show a composition bias toward low complexity. A DNA-binding region (T-box) is located at residues 213–393 (LWLKFHRHQT…HNPFAKGFRD (181 aa)). Thr408 carries the phosphothreonine modification. Ser410 is modified (phosphoserine). Residues 447-483 (PGAGAGPGPGTDRSVPHTNGLLSPQQAEDPGAPSPQR) form a disordered region. Over residues 462-472 (PHTNGLLSPQQ) the composition is skewed to polar residues. Ser594 carries the post-translational modification Phosphoserine. Positions 597–655 (APAAEDAKPKDLSDSSWIETPSSIKSIDSSDSGIYEQAKRRRISPADTPVSESSSPLKS) are disordered. The span at 618-628 (SSIKSIDSSDS) shows a compositional bias: low complexity. Ser640 is subject to Phosphoserine.

Homodimer. Part of a complex containing CASK, TBR1 and TSPYL2; may modulate gene expression in response to neuronal synaptic activity. Forms homodimers. Interacts with FOXP2. Interacts with FOXP1. Interacts with BCL11A. In terms of tissue distribution, expressed in the developing and adult cortex. Expressed in the olfactory bulbs.

Its subcellular location is the nucleus. Functionally, transcriptional repressor involved in multiple aspects of cortical development, including neuronal migration, laminar and areal identity, and axonal projection. As transcriptional repressor of FEZF2, it blocks the formation of the corticospinal (CS) tract from layer 6 projection neurons, thereby restricting the origin of CS axons specifically to layer 5 neurons. This is T-box brain protein 1 (Tbr1) from Mus musculus (Mouse).